Reading from the N-terminus, the 761-residue chain is Proline-rich extensin-like protein EPR1 (761 aa).

Residues 1-24 form the signal peptide; that stretch reads MRVPLIDFLRFLVLILSLSGASVA. The 1; degenerate repeat unit spans residues 63 to 77; that stretch reads YSPPIYPPPIQKPPT. A 40 X 17 AA approximate tandem repeats of Y-S-P-P-[IV]-[KY]-P-P-P-x(1,2)-K-P-P-T-P-T region spans residues 63–735; sequence YSPPIYPPPI…PPVQVPPTPT (673 aa). A run of 39 repeats spans residues 78-94, 95-111, 112-128, 129-145, 146-162, 163-179, 180-195, 196-212, 213-229, 230-246, 247-263, 264-280, 281-297, 298-314, 315-331, 332-347, 348-364, 365-381, 382-398, 399-415, 416-431, 432-448, 449-465, 466-481, 482-498, 499-515, 516-531, 532-548, 549-565, 566-582, 583-599, 600-616, 617-633, 634-650, 651-667, 668-684, 685-701, 702-718, and 719-735. Pro residues predominate over residues 111–750; sequence TYSPPIYPPP…QGGYGTPPPY (640 aa). Residues 111 to 761 form a disordered region; it reads TYSPPIYPPP…YLSHPIDIRN (651 aa).

This sequence belongs to the extensin family. In terms of tissue distribution, specifically expressed in endosperm during seed germination, at the site of radicle protrusion.

It is found in the secreted. Its subcellular location is the primary cell wall. May have a specific role in modifying the cell-wall structure, specifically during seed germination, thus facilitating radicle protrusion. This Arabidopsis thaliana (Mouse-ear cress) protein is Proline-rich extensin-like protein EPR1 (EPR1).